A 327-amino-acid polypeptide reads, in one-letter code: Cytochrome f (327 aa).

Residues 1 to 24 (MKRIYLALCALLLLLGTGSRPAAA) form the signal peptide. Heme is bound by residues Tyr25, Cys45, Cys48, and His49. The helical transmembrane segment at 293 to 313 (VKWLVAFLAAVAITQLLLVLK) threads the bilayer.

The protein belongs to the cytochrome f family. The 4 large subunits of the cytochrome b6-f complex are cytochrome b6, subunit IV (17 kDa polypeptide, PetD), cytochrome f and the Rieske protein, while the 4 small subunits are PetG, PetL, PetM and PetN. The complex functions as a dimer. It depends on heme as a cofactor.

It is found in the cellular thylakoid membrane. Functionally, component of the cytochrome b6-f complex, which mediates electron transfer between photosystem II (PSII) and photosystem I (PSI), cyclic electron flow around PSI, and state transitions. The sequence is that of Cytochrome f from Synechococcus sp. (strain JA-3-3Ab) (Cyanobacteria bacterium Yellowstone A-Prime).